We begin with the raw amino-acid sequence, 336 residues long: F420-dependent glucose-6-phosphate dehydrogenase (336 aa).

Aspartate 39 lines the coenzyme F420-(gamma-Glu)n pocket. Histidine 40 functions as the Proton donor in the catalytic mechanism. Residues threonine 76 and 107-108 each bind coenzyme F420-(gamma-Glu)n; that span reads TG. Catalysis depends on glutamate 109, which acts as the Proton acceptor. Residues asparagine 112, 177–178, and 180–181 contribute to the coenzyme F420-(gamma-Glu)n site; these read GG and QV. 4 residues coordinate substrate: threonine 195, lysine 198, lysine 259, and arginine 283.

This sequence belongs to the F420-dependent glucose-6-phosphate dehydrogenase family. As to quaternary structure, homodimer.

The catalysed reaction is oxidized coenzyme F420-(gamma-L-Glu)(n) + D-glucose 6-phosphate + H(+) = 6-phospho-D-glucono-1,5-lactone + reduced coenzyme F420-(gamma-L-Glu)(n). Its function is as follows. Catalyzes the coenzyme F420-dependent oxidation of glucose 6-phosphate (G6P) to 6-phosphogluconolactone. Appears to have a role in resistance to oxidative stress, via its consumption of G6P that serves as a source of reducing power to combat oxidative stress in mycobacteria. This Mycolicibacterium gilvum (strain PYR-GCK) (Mycobacterium gilvum (strain PYR-GCK)) protein is F420-dependent glucose-6-phosphate dehydrogenase.